Reading from the N-terminus, the 122-residue chain is Ribosome-binding factor A (122 aa).

This sequence belongs to the RbfA family. In terms of assembly, monomer. Binds 30S ribosomal subunits, but not 50S ribosomal subunits or 70S ribosomes.

The protein resides in the cytoplasm. Functionally, one of several proteins that assist in the late maturation steps of the functional core of the 30S ribosomal subunit. Associates with free 30S ribosomal subunits (but not with 30S subunits that are part of 70S ribosomes or polysomes). Required for efficient processing of 16S rRNA. May interact with the 5'-terminal helix region of 16S rRNA. This chain is Ribosome-binding factor A, found in Syntrophomonas wolfei subsp. wolfei (strain DSM 2245B / Goettingen).